Reading from the N-terminus, the 232-residue chain is Sugar fermentation stimulation protein homolog (232 aa).

This sequence belongs to the SfsA family.

This is Sugar fermentation stimulation protein homolog from Alkaliphilus metalliredigens (strain QYMF).